The chain runs to 152 residues: Protein-export protein SecB (152 aa).

This sequence belongs to the SecB family. In terms of assembly, homotetramer, a dimer of dimers. One homotetramer interacts with 1 SecA dimer.

It localises to the cytoplasm. One of the proteins required for the normal export of preproteins out of the cell cytoplasm. It is a molecular chaperone that binds to a subset of precursor proteins, maintaining them in a translocation-competent state. It also specifically binds to its receptor SecA. This Rickettsia typhi (strain ATCC VR-144 / Wilmington) protein is Protein-export protein SecB.